We begin with the raw amino-acid sequence, 356 residues long: Arginine kinase (356 aa).

One can recognise a Phosphagen kinase N-terminal domain in the interval 8–91; sequence EKLEAGFKKL…FDPIIEDYHG (84 aa). Residue 64 to 68 participates in substrate binding; that stretch reads GVGIY. One can recognise a Phosphagen kinase C-terminal domain in the interval 119–356; sequence YVISTRVRCG…LELIKIEGSL (238 aa). ATP-binding positions include 122-126 and H185; that span reads STRVR. E225 is a substrate binding site. R229 contributes to the ATP binding site. C271 serves as a coordination point for substrate. ATP-binding positions include 280–284 and 309–314; these read RASVH and RGSTGE. E314 lines the substrate pocket.

It belongs to the ATP:guanido phosphotransferase family.

It catalyses the reaction L-arginine + ATP = N(omega)-phospho-L-arginine + ADP + H(+). This is Arginine kinase (ARGK) from Schistocerca americana (American grasshopper).